The following is a 327-amino-acid chain: Phenylalanine--tRNA ligase alpha subunit (327 aa).

Glu-252 provides a ligand contact to Mg(2+).

This sequence belongs to the class-II aminoacyl-tRNA synthetase family. Phe-tRNA synthetase alpha subunit type 1 subfamily. In terms of assembly, tetramer of two alpha and two beta subunits. Requires Mg(2+) as cofactor.

The protein resides in the cytoplasm. The enzyme catalyses tRNA(Phe) + L-phenylalanine + ATP = L-phenylalanyl-tRNA(Phe) + AMP + diphosphate + H(+). The polypeptide is Phenylalanine--tRNA ligase alpha subunit (Vibrio parahaemolyticus serotype O3:K6 (strain RIMD 2210633)).